The chain runs to 349 residues: Glycerol-3-phosphate dehydrogenase [NAD(+)], cytoplasmic (349 aa).

10–15 (GSGNWG) contacts NAD(+). K120 lines the substrate pocket. A153 lines the NAD(+) pocket. S154 bears the Phosphoserine mark. K204 functions as the Proton acceptor in the catalytic mechanism. Position 269 (R269) interacts with NAD(+). A substrate-binding site is contributed by 269 to 270 (RN). Residue K289 is modified to N6-succinyllysine. NAD(+) contacts are provided by K296 and Q298. Y326 bears the Phosphotyrosine mark.

The protein belongs to the NAD-dependent glycerol-3-phosphate dehydrogenase family. In terms of assembly, homodimer.

It localises to the cytoplasm. The enzyme catalyses sn-glycerol 3-phosphate + NAD(+) = dihydroxyacetone phosphate + NADH + H(+). Has glycerol-3-phosphate dehydrogenase activity. This is Glycerol-3-phosphate dehydrogenase [NAD(+)], cytoplasmic from Rattus norvegicus (Rat).